The chain runs to 159 residues: Short coiled-coil protein (159 aa).

A coiled-coil region spans residues 78-146 (MMNADMDAVD…QYIENLMSAS (69 aa)).

This sequence belongs to the SCOC family. Homodimer. Interacts with ARL1, ARL2 and ARL3. Directly interacts with FEZ1 and UVRAG. The interaction with UVRAG is reduced by amino acid starvation, but the complex is stabilized in the presence of FEZ1. Interacts with NRBF2. Widely expressed with highest levels in brain, heart and skeletal muscle.

The protein localises to the golgi apparatus membrane. Its subcellular location is the golgi apparatus. It localises to the trans-Golgi network. It is found in the cytoplasm. The protein resides in the cytosol. In terms of biological role, positive regulator of amino acid starvation-induced autophagy. The chain is Short coiled-coil protein (SCOC) from Homo sapiens (Human).